The following is a 351-amino-acid chain: CREB homolog crh-2 (351 aa).

Disordered stretches follow at residues 46 to 104 and 119 to 149; these read EPCT…EPLG and SPSA…HQQQ. Positions 82 to 95 are enriched in low complexity; that stretch reads GSSSGSPSSSLSSP. The bZIP domain maps to 282–345; the sequence is SLKIVRRKIK…RDLQQKLHQY (64 aa). Residues 284–304 form a basic motif region; the sequence is KIVRRKIKNKLSAQESRRKRK. A leucine-zipper region spans residues 307–314; sequence IDALEGRL.

The protein belongs to the bZIP family.

The protein resides in the nucleus. Its function is as follows. Transcription factor. Plays a role in regulating the developmentally arrested larval state known as dauer, when induced by long-term exposure to the Gram-negative bacterium P.aeruginosa PAO1, but dispensable for dauer formation induced by starvation. Involved in regulating expression of microRNA mir-243, during long-term exposure to P.aeruginosa PAO1. The sequence is that of CREB homolog crh-2 from Caenorhabditis elegans.